We begin with the raw amino-acid sequence, 352 residues long: Chorismate synthase (352 aa).

Arg48 lines the NADP(+) pocket. FMN-binding positions include 125–127, 238–239, Gly278, 293–297, and Arg319; these read RSS, NA, and KPTSS.

The protein belongs to the chorismate synthase family. In terms of assembly, homotetramer. The cofactor is FMNH2.

The enzyme catalyses 5-O-(1-carboxyvinyl)-3-phosphoshikimate = chorismate + phosphate. Its pathway is metabolic intermediate biosynthesis; chorismate biosynthesis; chorismate from D-erythrose 4-phosphate and phosphoenolpyruvate: step 7/7. Its function is as follows. Catalyzes the anti-1,4-elimination of the C-3 phosphate and the C-6 proR hydrogen from 5-enolpyruvylshikimate-3-phosphate (EPSP) to yield chorismate, which is the branch point compound that serves as the starting substrate for the three terminal pathways of aromatic amino acid biosynthesis. This reaction introduces a second double bond into the aromatic ring system. The polypeptide is Chorismate synthase (Legionella pneumophila (strain Lens)).